The primary structure comprises 346 residues: S-adenosylmethionine:tRNA ribosyltransferase-isomerase (346 aa).

This sequence belongs to the QueA family. Monomer.

The protein resides in the cytoplasm. It carries out the reaction 7-aminomethyl-7-carbaguanosine(34) in tRNA + S-adenosyl-L-methionine = epoxyqueuosine(34) in tRNA + adenine + L-methionine + 2 H(+). The protein operates within tRNA modification; tRNA-queuosine biosynthesis. Transfers and isomerizes the ribose moiety from AdoMet to the 7-aminomethyl group of 7-deazaguanine (preQ1-tRNA) to give epoxyqueuosine (oQ-tRNA). The chain is S-adenosylmethionine:tRNA ribosyltransferase-isomerase from Lactococcus lactis subsp. cremoris (strain MG1363).